The following is a 663-amino-acid chain: COBRA-like protein 9 (663 aa).

Positions 1-23 (MGVLLPIFFGVLLLFTVTPPSMS) are cleaved as a signal peptide. N-linked (GlcNAc...) asparagine glycans are attached at residues N63, N111, N121, N169, N203, N326, N355, N397, N409, N429, N470, N550, and N561. S638 is lipidated: GPI-anchor amidated serine. Residues 639–663 (GGRRNGAITVLSFITFYVAAFMVLL) constitute a propeptide, removed in mature form.

It belongs to the COBRA family. Expressed only in flowers.

Its subcellular location is the cell membrane. This is COBRA-like protein 9 (COBL9) from Arabidopsis thaliana (Mouse-ear cress).